We begin with the raw amino-acid sequence, 248 residues long: Probable transcriptional regulatory protein PSPPH_3775 (248 aa).

This sequence belongs to the TACO1 family.

Its subcellular location is the cytoplasm. The chain is Probable transcriptional regulatory protein PSPPH_3775 from Pseudomonas savastanoi pv. phaseolicola (strain 1448A / Race 6) (Pseudomonas syringae pv. phaseolicola (strain 1448A / Race 6)).